Here is a 318-residue protein sequence, read N- to C-terminus: Serine protease 41 (318 aa).

The signal sequence occupies residues 1-19 (MGARGALLLALLLARAGLG). The propeptide occupies 20–54 (KPGELGALQAGPGAARRPGGGGREEACGHREIHAL). The Peptidase S1 domain maps to 55-297 (VAGGVESARG…YFHWIRRVMS (243 aa)). Cys-80 and Cys-96 form a disulfide bridge. Catalysis depends on charge relay system residues His-95 and Asp-147. Cystine bridges form between Cys-181–Cys-255, Cys-215–Cys-234, and Cys-245–Cys-273. Asn-211 carries N-linked (GlcNAc...) asparagine glycosylation. Catalysis depends on Ser-249, which acts as the Charge relay system. Asn-284 is a glycosylation site (N-linked (GlcNAc...) asparagine). The GPI-anchor amidated serine moiety is linked to residue Ser-299. Residues 300–318 (TPRPNPSQLLLLLALLWAP) constitute a propeptide, removed in mature form.

The protein belongs to the peptidase S1 family. N-glycosylated.

The protein resides in the cell membrane. This Homo sapiens (Human) protein is Serine protease 41.